The following is a 282-amino-acid chain: ATP synthase subunit a (282 aa).

Helical transmembrane passes span V38–A58, F97–M117, V145–C165, F187–A207, L225–V247, and T261–G281.

This sequence belongs to the ATPase A chain family. F-type ATPases have 2 components, CF(1) - the catalytic core - and CF(0) - the membrane proton channel. CF(1) has five subunits: alpha(3), beta(3), gamma(1), delta(1), epsilon(1). CF(0) has three main subunits: a(1), b(2) and c(9-12). The alpha and beta chains form an alternating ring which encloses part of the gamma chain. CF(1) is attached to CF(0) by a central stalk formed by the gamma and epsilon chains, while a peripheral stalk is formed by the delta and b chains.

It localises to the cell inner membrane. Key component of the proton channel; it plays a direct role in the translocation of protons across the membrane. The chain is ATP synthase subunit a from Azoarcus sp. (strain BH72).